The chain runs to 459 residues: Elongation factor 1-alpha (459 aa).

Glycine 2 carries the n,N,N-trimethylglycine modification. Lysine 3 is subject to N6,N6-dimethyllysine; alternate. An N6-methyllysine; alternate modification is found at lysine 3. The region spanning 5–240 is the tr-type G domain; that stretch reads KLHVNVVVIG…DAIEPPTRPT (236 aa). A G1 region spans residues 14–21; it reads GHVDSGKS. 14-21 is a GTP binding site; sequence GHVDSGKS. Lysine 30 bears the N6-methyllysine mark. The segment at 70–74 is G2; it reads GITID. Lysine 79 is subject to N6,N6,N6-trimethyllysine. The G3 stretch occupies residues 91 to 94; it reads DAPG. Residues 91–95 and 153–156 contribute to the GTP site; these read DAPGH and NKMD. The tract at residues 153–156 is G4; sequence NKMD. The tract at residues 192-194 is G5; sequence SGW. Lysine 316 is subject to N6,N6-dimethyllysine; alternate. Lysine 316 carries the post-translational modification N6-methyllysine; alternate. N6-methyllysine is present on lysine 390.

The protein belongs to the TRAFAC class translation factor GTPase superfamily. Classic translation factor GTPase family. EF-Tu/EF-1A subfamily.

Its subcellular location is the cytoplasm. Its function is as follows. This protein promotes the GTP-dependent binding of aminoacyl-tRNA to the A-site of ribosomes during protein biosynthesis. This Cryptococcus neoformans var. neoformans serotype D (strain B-3501A) (Filobasidiella neoformans) protein is Elongation factor 1-alpha (TEF1).